The chain runs to 74 residues: Conotoxin Vi15a (74 aa).

The N-terminal stretch at 1 to 19 is a signal peptide; it reads MMPVILLLLLSLAIRCADG. A propeptide spanning residues 20 to 43 is cleaved from the precursor; that stretch reads KAVQGDSDPSASLLTGDKNHDLPV. Residue Trp72 is modified to Tryptophan amide.

In terms of processing, contains four disulfide bonds. In terms of tissue distribution, expressed by the venom duct.

It is found in the secreted. In Conus virgo (Virgin cone), this protein is Conotoxin Vi15a.